The primary structure comprises 705 residues: Translation factor GUF1 homolog, mitochondrial (705 aa).

The transit peptide at 1-20 directs the protein to the mitochondrion; the sequence is MVCHRYLLGLGASTLCLRRL. A disordered region spans residues 72 to 92; it reads PVEDNGTTNLTGTGEATSETG. Residues 76-90 show a composition bias toward polar residues; the sequence is NGTTNLTGTGEATSE. Residues 105-288 form the tr-type G domain; the sequence is NRMRNFCIIA…AVVERIPPPK (184 aa). GTP-binding positions include 114–121, 181–185, and 235–238; these read AHVDHGKS, DTPGH, and NKID.

Belongs to the TRAFAC class translation factor GTPase superfamily. Classic translation factor GTPase family. LepA subfamily.

It is found in the mitochondrion inner membrane. The enzyme catalyses GTP + H2O = GDP + phosphate + H(+). Functionally, promotes mitochondrial protein synthesis. May act as a fidelity factor of the translation reaction, by catalyzing a one-codon backward translocation of tRNAs on improperly translocated ribosomes. Binds to mitochondrial ribosomes in a GTP-dependent manner. In Babesia bovis, this protein is Translation factor GUF1 homolog, mitochondrial.